The sequence spans 359 residues: N-acetyl-gamma-glutamyl-phosphate reductase (359 aa).

Cys162 is an active-site residue.

This sequence belongs to the NAGSA dehydrogenase family. Type 1 subfamily.

The protein localises to the cytoplasm. The catalysed reaction is N-acetyl-L-glutamate 5-semialdehyde + phosphate + NADP(+) = N-acetyl-L-glutamyl 5-phosphate + NADPH + H(+). It participates in amino-acid biosynthesis; L-arginine biosynthesis; N(2)-acetyl-L-ornithine from L-glutamate: step 3/4. In terms of biological role, catalyzes the NADPH-dependent reduction of N-acetyl-5-glutamyl phosphate to yield N-acetyl-L-glutamate 5-semialdehyde. The protein is N-acetyl-gamma-glutamyl-phosphate reductase of Prochlorococcus marinus (strain NATL2A).